The sequence spans 581 residues: Zinc metalloproteinase nas-36 (581 aa).

Residues 1–95 constitute a propeptide that is removed on maturation; that stretch reads MKEIAHSQAY…FRGANEKGKR (95 aa). An N-linked (GlcNAc...) asparagine glycan is attached at asparagine 67. In terms of domain architecture, Peptidase M12A spans 97–290; it reads AAEYDAKWFQ…IKLINEAYCK (194 aa). 5 disulfides stabilise this stretch: cysteine 137–cysteine 289, cysteine 159–cysteine 178, cysteine 293–cysteine 313, cysteine 315–cysteine 324, and cysteine 336–cysteine 364. Zn(2+) is bound at residue histidine 186. Glutamate 187 is a catalytic residue. Positions 190 and 196 each coordinate Zn(2+). The EGF-like domain occupies 285–325; it reads NEAYCKGDCKEKNECKNGGYLNPSNCQSCLCPSGFGGSKCE. The CUB domain occupies 336-449; sequence CGGTLKAIID…TGFKLKFRKT (114 aa). Asparagine 418 carries an N-linked (GlcNAc...) asparagine glycan. Residues 474–523 form the TSP type-1 domain; sequence NDIWSEWGEWSQCSRSCGACGIKSRLRICKTAQCSGKVQQFLTCNLQACP. Disulfide bonds link cysteine 486–cysteine 517, cysteine 490–cysteine 522, and cysteine 502–cysteine 507.

The cofactor is Zn(2+).

It localises to the secreted. With respect to regulation, inhibited by 1,10-phenanthroline. In terms of biological role, metalloprotease. Involved in molting, a process during larval stages in which a new cuticle is formed and the old cuticle is shed. This Brugia malayi (Filarial nematode worm) protein is Zinc metalloproteinase nas-36.